We begin with the raw amino-acid sequence, 700 residues long: Glycine--tRNA ligase beta subunit (700 aa).

Belongs to the class-II aminoacyl-tRNA synthetase family. Tetramer of two alpha and two beta subunits.

It localises to the cytoplasm. The enzyme catalyses tRNA(Gly) + glycine + ATP = glycyl-tRNA(Gly) + AMP + diphosphate. This chain is Glycine--tRNA ligase beta subunit, found in Janthinobacterium sp. (strain Marseille) (Minibacterium massiliensis).